The following is a 757-amino-acid chain: Probable phospholipase C20G8.02, mitochondrial (757 aa).

A mitochondrion-targeting transit peptide spans 1–13 (MILYIVLPFYVRT). The interval 289 to 330 (ESNSKPSTPVPTEELTSTTLLNDSSDPSDNFTPSNTESTIDL) is disordered. Polar residues predominate over residues 302 to 329 (ELTSTTLLNDSSDPSDNFTPSNTESTID). Ser524 is a catalytic residue. In terms of domain architecture, DDHD spans 547–757 (LDFPVANFFA…LAHFILTQLL (211 aa)).

The protein belongs to the PA-PLA1 family.

It localises to the mitochondrion. Functionally, probable phospholipase that hydrolyzes phosphatidic acid. The chain is Probable phospholipase C20G8.02, mitochondrial from Schizosaccharomyces pombe (strain 972 / ATCC 24843) (Fission yeast).